We begin with the raw amino-acid sequence, 23 residues long: Aurein-4.3 (23 aa).

Belongs to the frog skin active peptide (FSAP) family. Aurein subfamily. In terms of tissue distribution, expressed by the skin dorsal glands.

Its subcellular location is the secreted. In terms of biological role, has no antimicrobial or anticancer activity. The chain is Aurein-4.3 from Ranoidea aurea (Green and golden bell frog).